The primary structure comprises 383 residues: Anhydro-N-acetylmuramic acid kinase (383 aa).

9–16 (GTSLDGID) is a binding site for ATP.

Belongs to the anhydro-N-acetylmuramic acid kinase family.

It catalyses the reaction 1,6-anhydro-N-acetyl-beta-muramate + ATP + H2O = N-acetyl-D-muramate 6-phosphate + ADP + H(+). The protein operates within amino-sugar metabolism; 1,6-anhydro-N-acetylmuramate degradation. It functions in the pathway cell wall biogenesis; peptidoglycan recycling. In terms of biological role, catalyzes the specific phosphorylation of 1,6-anhydro-N-acetylmuramic acid (anhMurNAc) with the simultaneous cleavage of the 1,6-anhydro ring, generating MurNAc-6-P. Is required for the utilization of anhMurNAc either imported from the medium or derived from its own cell wall murein, and thus plays a role in cell wall recycling. The sequence is that of Anhydro-N-acetylmuramic acid kinase from Bacillus cereus (strain ATCC 10987 / NRS 248).